Reading from the N-terminus, the 403-residue chain is Phospholipase A1-II 2 (403 aa).

The active-site Acyl-ester intermediate is the Ser218. Catalysis depends on charge relay system residues Ser218, Asp286, and His323. The disordered stretch occupies residues 381 to 403; sequence GPDGRWVLQDHEPDDDDDDDDDD. A compositionally biased stretch (acidic residues) spans 392–403; the sequence is EPDDDDDDDDDD.

This sequence belongs to the AB hydrolase superfamily. Lipase family.

It localises to the cytoplasm. In terms of biological role, acylhydrolase that catalyzes the hydrolysis of phospholipids at the sn-1 position. This is Phospholipase A1-II 2 from Oryza sativa subsp. indica (Rice).